We begin with the raw amino-acid sequence, 906 residues long: MLGKIIAKLFGSRNERIIKQLSKTVKKINALEESMIALDDAALRAKTDEFRKRLTEGETLDDVLPEAFAVVREAAKRVLGLRHYDVQLIGGMVLHQGKIAEMRTGEGKTLVATLAVYLNALSGEGVHVVTVNDYLAKRDGGELGKLYSFLGLTTGIIVSGMDTEEKKAAYRADITYGTNSEFGFDYLRTNMALSPDQRLQRKLNFAIVDEVDSILIDEARTPLIISGPAEMNTELYRKLNELVPYLTLQKKDPNQEKRSLLNDEEEIETGDFSIDEKTKQVGLTEMGHAHIEKLLVEKGLIAENESLYEPKNIGLFHHLNACLRAHHLYHRDVDYIVKDGQVMIVDEFTGRTLAGRRWSDGLHQAIEIKEGVTVQQESQTLASITYQNFFRMYEKLSGMTGTADTEAYEFQDIYNLETVVIPTNRPIARIDYTDMIFLKQSGKYQAIVAEVKECLARRQPVLLGTASIETSELISDLLTKEGVAHNVLNAKQHAREAEIVANAGLPGQITIATNMAGRGTDIVLGGSLKAELDKLGADATEEEKAAVQEAWQKRHDEVIAAGGLHVIGAERHESRRIDNQLRGRSGRQGDPGSSRFYVALDDNLVRIFAGDRMAGMMERLGMGENDVIESKMVSRQIEGAQRKVEAHNFDARKHLLEYDDVANEQRKVIYNQRSVIMDAENIREMLDEMRESIVTRLITHYVPADQVRQNWEVAGLEAALLNEFGLSIAVEKEWLAKEPDLSVDEIQKRLLAAFNAIDAQKRAQYGDDMMDWAGKYVALQIIDELWKGHLATMDMLRQAIWLRSRAQKDPKREYQRESYELFIDLLANIQLQIVRLLNHITFNAPNAESTATAAEPAPEASQSQSTNDATASQNPPITEVEASKVGRNQPCPCGSGKKYKHCCGKL.

ATP is bound by residues Gln87, 105 to 109 (GEGKT), and Asp521. A compositionally biased stretch (low complexity) spans 849 to 865 (STATAAEPAPEASQSQS). Residues 849–897 (STATAAEPAPEASQSQSTNDATASQNPPITEVEASKVGRNQPCPCGSGK) form a disordered region. The span at 866 to 876 (TNDATASQNPP) shows a compositional bias: polar residues. Residues Cys891, Cys893, Cys902, and Cys903 each coordinate Zn(2+).

Belongs to the SecA family. Monomer and homodimer. Part of the essential Sec protein translocation apparatus which comprises SecA, SecYEG and auxiliary proteins SecDF-YajC and YidC. Requires Zn(2+) as cofactor.

Its subcellular location is the cell inner membrane. The protein localises to the cytoplasm. The enzyme catalyses ATP + H2O + cellular proteinSide 1 = ADP + phosphate + cellular proteinSide 2.. Its function is as follows. Part of the Sec protein translocase complex. Interacts with the SecYEG preprotein conducting channel. Has a central role in coupling the hydrolysis of ATP to the transfer of proteins into and across the cell membrane, serving both as a receptor for the preprotein-SecB complex and as an ATP-driven molecular motor driving the stepwise translocation of polypeptide chains across the membrane. The polypeptide is Protein translocase subunit SecA (Dichelobacter nodosus (strain VCS1703A)).